The sequence spans 696 residues: Tegument protein UL47 (696 aa).

Composition is skewed to basic residues over residues 1 to 15 (MSVR…RAST) and 70 to 81 (RRRREARGHPGS). 2 disordered regions span residues 1 to 39 (MSVR…GGVG) and 54 to 130 (SEVE…YLGP). The tract at residues 57–84 (EAAGEMASEEPPPRRRREARGHPGSRRA) is RNA-binding. A Nuclear localization signal motif is present at residues 70 to 84 (RRRREARGHPGSRRA). A compositionally biased stretch (low complexity) spans 87–103 (ARAAAPPRRASFPRPRS). The Nuclear export signal signature appears at 650–673 (SVLGPRVRVVDIMAQFRKLLMGDE).

It belongs to the alphaherpesvirinae HHV-1 UL47 family. In terms of assembly, interacts with US3 kinase. Interacts with UL31 and UL34; these interactions seem important for efficient virion nuclear egress. Interacts with UL41/VHS. Post-translationally, phosphorylated by US3. This phosphorylation is required for proper nuclear localization.

The protein resides in the virion tegument. It localises to the host nucleus. The protein localises to the host cytoplasm. Functionally, tegument protein that can bind to various RNA transcripts. Plays a role in the attenuation of selective viral and cellular mRNA degradation by modulating the activity of host shutoff RNase UL41/VHS. Also plays a role in the primary envelopment of virions in the perinuclear space, probably by interacting with two nuclear egress proteins UL31 and UL34. The protein is Tegument protein UL47 of Human herpesvirus 2 (strain HG52) (HHV-2).